Here is a 125-residue protein sequence, read N- to C-terminus: Small ribosomal subunit protein uS13 (125 aa).

Residues 94–125 are disordered; the sequence is SLPVRGQRTQTNARTRKGKRKTVAGKKKAVKK. Basic residues predominate over residues 107–125; sequence RTRKGKRKTVAGKKKAVKK.

It belongs to the universal ribosomal protein uS13 family. In terms of assembly, part of the 30S ribosomal subunit. Forms a loose heterodimer with protein S19. Forms two bridges to the 50S subunit in the 70S ribosome.

In terms of biological role, located at the top of the head of the 30S subunit, it contacts several helices of the 16S rRNA. In the 70S ribosome it contacts the 23S rRNA (bridge B1a) and protein L5 of the 50S subunit (bridge B1b), connecting the 2 subunits; these bridges are implicated in subunit movement. Contacts the tRNAs in the A and P-sites. This is Small ribosomal subunit protein uS13 from Prosthecochloris aestuarii (strain DSM 271 / SK 413).